We begin with the raw amino-acid sequence, 246 residues long: Transcriptional regulatory protein LytR (246 aa).

Positions 2–116 constitute a Response regulatory domain; that stretch reads KALIIDDEPL…RIEQAVNKVR (115 aa). Position 53 is a 4-aspartylphosphate (Asp-53). The region spanning 141-245 is the HTH LytTR-type domain; the sequence is LPVEIDDKIH…MKDFKASIGL (105 aa).

In terms of assembly, homodimer; when phosphorylated. In terms of processing, phosphorylated and dephosphorylated by LytS.

The protein localises to the cytoplasm. Member of the two-component regulatory system LytR/LytS that regulates genes involved in autolysis, programmed cell death, biofilm formation and cell wall metabolism. Also participates in sensing and responding to host defense cationic antimicrobial peptides (HDPs). Upon phosphorylation by LytS, functions as a transcription regulator by direct binding to promoter regions of target genes including lrgA and lrgB, to positively regulate their expression. This chain is Transcriptional regulatory protein LytR (lytR), found in Staphylococcus aureus (strain USA300).